Here is a 1392-residue protein sequence, read N- to C-terminus: DNA-directed RNA polymerase subunit beta (1392 aa).

The protein belongs to the RNA polymerase beta chain family. In terms of assembly, the RNAP catalytic core consists of 2 alpha, 1 beta, 1 beta' and 1 omega subunit. When a sigma factor is associated with the core the holoenzyme is formed, which can initiate transcription.

It carries out the reaction RNA(n) + a ribonucleoside 5'-triphosphate = RNA(n+1) + diphosphate. DNA-dependent RNA polymerase catalyzes the transcription of DNA into RNA using the four ribonucleoside triphosphates as substrates. This chain is DNA-directed RNA polymerase subunit beta, found in Neisseria meningitidis serogroup A / serotype 4A (strain DSM 15465 / Z2491).